Consider the following 379-residue polypeptide: Deoxyhypusine synthase (379 aa).

Residues 108 to 112 (SNLIS), 134 to 136 (TAG), Glu140, and Asp257 each bind NAD(+). A spermidine-binding site is contributed by 139–140 (EE). Asp262 is a binding site for spermidine. Gly304 provides a ligand contact to NAD(+). His309 provides a ligand contact to spermidine. Position 329–330 (329–330 (TG)) interacts with NAD(+). Spermidine-binding positions include 335–337 (GSD) and 344–350 (EAVSWGK). Lys350 (nucleophile) is an active-site residue. 363–364 (DA) contacts NAD(+).

Belongs to the deoxyhypusine synthase family. NAD(+) serves as cofactor.

The enzyme catalyses [eIF5A protein]-L-lysine + spermidine = [eIF5A protein]-deoxyhypusine + propane-1,3-diamine. It functions in the pathway protein modification; eIF5A hypusination. Its function is as follows. Catalyzes the NAD-dependent oxidative cleavage of spermidine and the subsequent transfer of the butylamine moiety of spermidine to the epsilon-amino group of a specific lysine residue of the eIF-5A precursor protein to form the intermediate deoxyhypusine residue. In Kluyveromyces lactis (strain ATCC 8585 / CBS 2359 / DSM 70799 / NBRC 1267 / NRRL Y-1140 / WM37) (Yeast), this protein is Deoxyhypusine synthase (DYS1).